The chain runs to 320 residues: Phosphate acyltransferase (320 aa).

Belongs to the PlsX family. As to quaternary structure, homodimer. Probably interacts with PlsY.

The protein resides in the cytoplasm. The enzyme catalyses a fatty acyl-[ACP] + phosphate = an acyl phosphate + holo-[ACP]. Its pathway is lipid metabolism; phospholipid metabolism. Catalyzes the reversible formation of acyl-phosphate (acyl-PO(4)) from acyl-[acyl-carrier-protein] (acyl-ACP). This enzyme utilizes acyl-ACP as fatty acyl donor, but not acyl-CoA. This chain is Phosphate acyltransferase, found in Chlamydia pneumoniae (Chlamydophila pneumoniae).